A 280-amino-acid chain; its full sequence is Dual adapter for phosphotyrosine and 3-phosphotyrosine and 3-phosphoinositide (280 aa).

Positions 35-129 (WYHGNLTRHA…GTLMVLKHPY (95 aa)) constitute an SH2 domain. The residue at position 139 (tyrosine 139) is a Phosphotyrosine. Serine 141 is modified (phosphoserine). The PH domain occupies 164-259 (LGTKEGYLTK…WIKILRWKLS (96 aa)).

In terms of assembly, interacts with PtdIns(3,4,5)P3 and PLCG2. In terms of processing, phosphorylated on tyrosine residues.

It localises to the cytoplasm. It is found in the membrane. Its function is as follows. May act as a B-cell-associated adapter that regulates B-cell antigen receptor (BCR)-signaling downstream of PI3K. In Mus musculus (Mouse), this protein is Dual adapter for phosphotyrosine and 3-phosphotyrosine and 3-phosphoinositide (Dapp1).